A 426-amino-acid polypeptide reads, in one-letter code: Probable imidazolonepropionase (426 aa).

The 4-imidazolone-5-propanoate site is built by Y159 and H192. Y159 is an N-formimidoyl-L-glutamate binding site. H260 lines the Fe(3+) pocket. Zn(2+) is bound at residue H260. 4-imidazolone-5-propanoate is bound at residue E263. Fe(3+) is bound at residue D334. Position 334 (D334) interacts with Zn(2+). Position 336 (N336) interacts with N-formimidoyl-L-glutamate.

Belongs to the metallo-dependent hydrolases superfamily. HutI family. Zn(2+) is required as a cofactor. It depends on Fe(3+) as a cofactor.

It carries out the reaction 4-imidazolone-5-propanoate + H2O = N-formimidoyl-L-glutamate. Its pathway is amino-acid degradation; L-histidine degradation into L-glutamate; N-formimidoyl-L-glutamate from L-histidine: step 3/3. This chain is Probable imidazolonepropionase (AMDHD1), found in Bos taurus (Bovine).